The sequence spans 1491 residues: Chromosome partition protein MukB (1491 aa).

34–41 (GGNGAGKS) provides a ligand contact to ATP. Coiled-coil stretches lie at residues 302 to 450 (LIEQ…LKAE), 490 to 600 (ARSE…RFES), 781 to 806 (RAAR…AKAS), 836 to 1109 (EQAL…DLRT), and 1210 to 1239 (VEAI…ISSD). The tract at residues 667–784 (PGGSNDPRLK…AIPLFGRAAR (118 aa)) is flexible hinge. Positions 1059 to 1080 (QRRRDELQERLHTSRSRKSEYE) are disordered.

This sequence belongs to the SMC family. MukB subfamily. As to quaternary structure, homodimerization via its hinge domain. Binds to DNA via its C-terminal region. Interacts, and probably forms a ternary complex, with MukE and MukF via its C-terminal region. The complex formation is stimulated by calcium or magnesium. Interacts with tubulin-related protein FtsZ.

Its subcellular location is the cytoplasm. It localises to the nucleoid. Plays a central role in chromosome condensation, segregation and cell cycle progression. Functions as a homodimer, which is essential for chromosome partition. Involved in negative DNA supercoiling in vivo, and by this means organize and compact chromosomes. May achieve or facilitate chromosome segregation by condensation DNA from both sides of a centrally located replisome during cell division. In Vibrio cholerae serotype O1 (strain ATCC 39315 / El Tor Inaba N16961), this protein is Chromosome partition protein MukB.